The sequence spans 374 residues: uncharacterized protein (374 aa).

The stretch at 298–332 (TKEKLLKLHSEQKSLSEKINKLSGEKDIEQSMINN) forms a coiled coil.

This is an uncharacterized protein from Acanthamoeba polyphaga (Amoeba).